The sequence spans 271 residues: Putative pyruvate, phosphate dikinase regulatory protein (271 aa).

ADP is bound at residue glycine 150 to threonine 157.

It belongs to the pyruvate, phosphate/water dikinase regulatory protein family. PDRP subfamily.

It catalyses the reaction N(tele)-phospho-L-histidyl/L-threonyl-[pyruvate, phosphate dikinase] + ADP = N(tele)-phospho-L-histidyl/O-phospho-L-threonyl-[pyruvate, phosphate dikinase] + AMP + H(+). It carries out the reaction N(tele)-phospho-L-histidyl/O-phospho-L-threonyl-[pyruvate, phosphate dikinase] + phosphate + H(+) = N(tele)-phospho-L-histidyl/L-threonyl-[pyruvate, phosphate dikinase] + diphosphate. Its function is as follows. Bifunctional serine/threonine kinase and phosphorylase involved in the regulation of the pyruvate, phosphate dikinase (PPDK) by catalyzing its phosphorylation/dephosphorylation. This chain is Putative pyruvate, phosphate dikinase regulatory protein, found in Oceanobacillus iheyensis (strain DSM 14371 / CIP 107618 / JCM 11309 / KCTC 3954 / HTE831).